A 292-amino-acid polypeptide reads, in one-letter code: Cytidine deaminase (292 aa).

CMP/dCMP-type deaminase domains lie at 47-167 (TPLK…FGPK) and 186-292 (DHQD…YYSL). 88–90 (NQE) provides a ligand contact to substrate. Residue H101 participates in Zn(2+) binding. The active-site Proton donor is the E103. The Zn(2+) site is built by C128 and C131.

This sequence belongs to the cytidine and deoxycytidylate deaminase family. As to quaternary structure, homodimer. Requires Zn(2+) as cofactor.

It carries out the reaction cytidine + H2O + H(+) = uridine + NH4(+). The enzyme catalyses 2'-deoxycytidine + H2O + H(+) = 2'-deoxyuridine + NH4(+). This enzyme scavenges exogenous and endogenous cytidine and 2'-deoxycytidine for UMP synthesis. The chain is Cytidine deaminase from Haemophilus influenzae (strain PittEE).